The primary structure comprises 150 residues: Transcriptional regulator MraZ (150 aa).

2 consecutive SpoVT-AbrB domains span residues 11-53 (TYTP…PFDE) and 82-125 (AVDQ…NKDT).

The protein belongs to the MraZ family. In terms of assembly, forms oligomers.

It is found in the cytoplasm. It localises to the nucleoid. The chain is Transcriptional regulator MraZ from Bifidobacterium longum (strain NCC 2705).